A 125-amino-acid chain; its full sequence is Egg cell-secreted protein 1.2 (125 aa).

A signal peptide spans 1 to 22 (MASNTSFLFATIAILLVLNISG).

The protein belongs to the plant egg cell-secreted peptide family. Restricted to female reproductive tissues, specifically accumulating in storage vesicles of the unfertilized egg cell.

It localises to the cytoplasmic vesicle. It is found in the secreted. Its function is as follows. Involved in the regulation of gamete interactions during the double fertilization and to prevent multiple-pollen tube attraction; mediates the redistribution of the gamete fusogen HAP2/GCS1 to the cell surface after secretion upon sperm arrival. This Arabidopsis thaliana (Mouse-ear cress) protein is Egg cell-secreted protein 1.2 (EC1.2).